The chain runs to 361 residues: Thermostable alkaline protease (361 aa).

A signal peptide spans Met1–Ala24. Residues Ser25–Ser93 constitute a propeptide that is removed on maturation. Gln94 serves as a coordination point for Ca(2+). The region spanning Pro97 to Thr360 is the Peptidase S8 domain. The active-site Charge relay system is the Asp124. A Ca(2+)-binding site is contributed by Asp132. The active-site Charge relay system is the His154. Ca(2+)-binding residues include Leu165, Asn167, Ile169, Val171, Ala255, Tyr257, and Val260. Catalysis depends on Ser307, which acts as the Charge relay system.

Belongs to the peptidase S8 family. Requires Ca(2+) as cofactor.

The protein resides in the secreted. Shows keratinolytic activity. The protein is Thermostable alkaline protease of Halalkalibacterium halodurans (strain ATCC BAA-125 / DSM 18197 / FERM 7344 / JCM 9153 / C-125) (Bacillus halodurans).